A 436-amino-acid polypeptide reads, in one-letter code: Hydroxycinnamoyltransferase (436 aa).

Active-site proton acceptor residues include His154 and Asp383.

This sequence belongs to the plant acyltransferase family. Mostly expressed in stems, and, to a lower extent, in bulbs.

The protein operates within phenylpropanoid metabolism. Hydroxycinnamoyl transferase that catalyzes the transfer of an acyl from p-coumaryol-CoA to various acyl acceptors. Can use feruloyl-CoA and caffeoyl-CoA as acyl donors. The chain is Hydroxycinnamoyltransferase from Narcissus pseudonarcissus (Daffodil).